We begin with the raw amino-acid sequence, 269 residues long: Formamidopyrimidine-DNA glycosylase (269 aa).

The active-site Schiff-base intermediate with DNA is P2. Residue E3 is the Proton donor of the active site. K57 acts as the Proton donor; for beta-elimination activity in catalysis. DNA contacts are provided by H90, R109, and K150. The FPG-type zinc finger occupies 235-269 (QVYGRAGEPCRQCGHPIEIAKHGQRSTFFCRHCQH). R259 serves as the catalytic Proton donor; for delta-elimination activity.

Belongs to the FPG family. As to quaternary structure, monomer. Requires Zn(2+) as cofactor.

It catalyses the reaction Hydrolysis of DNA containing ring-opened 7-methylguanine residues, releasing 2,6-diamino-4-hydroxy-5-(N-methyl)formamidopyrimidine.. It carries out the reaction 2'-deoxyribonucleotide-(2'-deoxyribose 5'-phosphate)-2'-deoxyribonucleotide-DNA = a 3'-end 2'-deoxyribonucleotide-(2,3-dehydro-2,3-deoxyribose 5'-phosphate)-DNA + a 5'-end 5'-phospho-2'-deoxyribonucleoside-DNA + H(+). Its function is as follows. Involved in base excision repair of DNA damaged by oxidation or by mutagenic agents. Acts as a DNA glycosylase that recognizes and removes damaged bases. Has a preference for oxidized purines, such as 7,8-dihydro-8-oxoguanine (8-oxoG). Has AP (apurinic/apyrimidinic) lyase activity and introduces nicks in the DNA strand. Cleaves the DNA backbone by beta-delta elimination to generate a single-strand break at the site of the removed base with both 3'- and 5'-phosphates. The chain is Formamidopyrimidine-DNA glycosylase from Yersinia pseudotuberculosis serotype O:1b (strain IP 31758).